Reading from the N-terminus, the 443-residue chain is Probable glycine dehydrogenase (decarboxylating) subunit 1 (443 aa).

This sequence belongs to the GcvP family. N-terminal subunit subfamily. In terms of assembly, the glycine cleavage system is composed of four proteins: P, T, L and H. In this organism, the P 'protein' is a heterodimer of two subunits.

The enzyme catalyses N(6)-[(R)-lipoyl]-L-lysyl-[glycine-cleavage complex H protein] + glycine + H(+) = N(6)-[(R)-S(8)-aminomethyldihydrolipoyl]-L-lysyl-[glycine-cleavage complex H protein] + CO2. In terms of biological role, the glycine cleavage system catalyzes the degradation of glycine. The P protein binds the alpha-amino group of glycine through its pyridoxal phosphate cofactor; CO(2) is released and the remaining methylamine moiety is then transferred to the lipoamide cofactor of the H protein. This chain is Probable glycine dehydrogenase (decarboxylating) subunit 1, found in Endomicrobium trichonymphae.